A 181-amino-acid polypeptide reads, in one-letter code: ATP synthase subunit delta (181 aa).

The protein belongs to the ATPase delta chain family. As to quaternary structure, F-type ATPases have 2 components, F(1) - the catalytic core - and F(0) - the membrane proton channel. F(1) has five subunits: alpha(3), beta(3), gamma(1), delta(1), epsilon(1). CF(0) has four main subunits: a(1), b(1), b'(1) and c(10-14). The alpha and beta chains form an alternating ring which encloses part of the gamma chain. F(1) is attached to F(0) by a central stalk formed by the gamma and epsilon chains, while a peripheral stalk is formed by the delta, b and b' chains.

It localises to the cellular thylakoid membrane. Its function is as follows. F(1)F(0) ATP synthase produces ATP from ADP in the presence of a proton or sodium gradient. F-type ATPases consist of two structural domains, F(1) containing the extramembraneous catalytic core and F(0) containing the membrane proton channel, linked together by a central stalk and a peripheral stalk. During catalysis, ATP synthesis in the catalytic domain of F(1) is coupled via a rotary mechanism of the central stalk subunits to proton translocation. This protein is part of the stalk that links CF(0) to CF(1). It either transmits conformational changes from CF(0) to CF(1) or is implicated in proton conduction. The chain is ATP synthase subunit delta from Synechococcus sp. (strain RCC307).